The chain runs to 830 residues: Protein translocase subunit SecA (830 aa).

ATP is bound by residues Gln86, 104 to 108, and Asp491; that span reads GEGKT. Residues Cys813, Cys815, Cys824, and Cys825 each coordinate Zn(2+).

Belongs to the SecA family. As to quaternary structure, monomer and homodimer. Part of the essential Sec protein translocation apparatus which comprises SecA, SecYEG and auxiliary proteins SecDF. Other proteins may also be involved. Zn(2+) is required as a cofactor.

It is found in the cell membrane. It localises to the cytoplasm. It carries out the reaction ATP + H2O + cellular proteinSide 1 = ADP + phosphate + cellular proteinSide 2.. In terms of biological role, part of the Sec protein translocase complex. Interacts with the SecYEG preprotein conducting channel. Has a central role in coupling the hydrolysis of ATP to the transfer of proteins into and across the cell membrane, serving as an ATP-driven molecular motor driving the stepwise translocation of polypeptide chains across the membrane. The chain is Protein translocase subunit SecA from Syntrophomonas wolfei subsp. wolfei (strain DSM 2245B / Goettingen).